Reading from the N-terminus, the 311-residue chain is Porphobilinogen deaminase (311 aa).

Position 241 is an S-(dipyrrolylmethanemethyl)cysteine (cysteine 241).

The protein belongs to the HMBS family. Monomer. It depends on dipyrromethane as a cofactor.

The catalysed reaction is 4 porphobilinogen + H2O = hydroxymethylbilane + 4 NH4(+). Its pathway is porphyrin-containing compound metabolism; protoporphyrin-IX biosynthesis; coproporphyrinogen-III from 5-aminolevulinate: step 2/4. Functionally, tetrapolymerization of the monopyrrole PBG into the hydroxymethylbilane pre-uroporphyrinogen in several discrete steps. This Geobacillus sp. (strain WCH70) protein is Porphobilinogen deaminase.